A 411-amino-acid chain; its full sequence is Zinc finger protein draculin (411 aa).

The segment at 1–33 (MKNTTKPCRTEHHNAEGQRDRMEGNKKGETKAK) is disordered. Residues 8–32 (CRTEHHNAEGQRDRMEGNKKGETKA) show a composition bias toward basic and acidic residues. 13 C2H2-type zinc fingers span residues 36-58 (VACS…MRVH), 64-86 (YRCD…LDIH), 92-114 (YTCD…MTLH), 120-142 (YKCD…MKLH), 148-170 (HKCE…LMVH), 176-198 (YTCD…MNIH), 204-226 (YTCD…MRFH), 232-254 (FTCD…MKIH), 260-282 (YTCD…MTHH), 288-310 (FHCD…IKTH), 316-338 (YSCL…EKRH), 344-366 (FMCF…LPVH), and 372-394 (YMCS…EKTH).

As to expression, specifically expressed in the hematopoietic lineage during embryogenesis; first expressed at the late blastula stage around the blastoderm margin. During gastrulation, restricted to the ventral mesoderm, the presumptive prechordal plate and the dorso-marginal cells of the organizer. At the 3-somite stage, strongly expressed in a caudal domain (marking the erythroid lineage) and a cephalic domain of the lateral mesoderm. At the 8- to 10-somite stage, caudal expression is in two bands of lateral mesoderm which later converge at the midline. Anterior expression is also in two bands of lateral mesoderm which converge as two patches at the midline by the 15-somite stage, with increased scattering of single cells (macrophage precursors) away from the midline to the yolksac. Once at the yolksac, expression is lost. By 20-24 hours post-fertilization (hpf), expressed in proerythroblasts in the erythroid blood island centered above the uro-genital opening. Expression persists in circulating erythroblasts but is lost in mature erythrocytes.

The polypeptide is Zinc finger protein draculin (Danio rerio (Zebrafish)).